Here is a 251-residue protein sequence, read N- to C-terminus: Triosephosphate isomerase (251 aa).

Residue 9–11 (NWK) participates in substrate binding. The active-site Electrophile is the His-95. The active-site Proton acceptor is the Glu-167. Residues Gly-173, Ser-213, and 234-235 (GG) contribute to the substrate site.

Belongs to the triosephosphate isomerase family. In terms of assembly, homodimer.

The protein resides in the cytoplasm. It carries out the reaction D-glyceraldehyde 3-phosphate = dihydroxyacetone phosphate. It participates in carbohydrate biosynthesis; gluconeogenesis. It functions in the pathway carbohydrate degradation; glycolysis; D-glyceraldehyde 3-phosphate from glycerone phosphate: step 1/1. In terms of biological role, involved in the gluconeogenesis. Catalyzes stereospecifically the conversion of dihydroxyacetone phosphate (DHAP) to D-glyceraldehyde-3-phosphate (G3P). The protein is Triosephosphate isomerase of Latilactobacillus sakei subsp. sakei (strain 23K) (Lactobacillus sakei subsp. sakei).